A 180-amino-acid polypeptide reads, in one-letter code: NADH-quinone oxidoreductase subunit I (180 aa).

4Fe-4S ferredoxin-type domains lie at 50–80 and 90–119; these read LTRD…LQKA and EFFR…LTPD. Cysteine 60, cysteine 63, cysteine 66, cysteine 70, cysteine 99, cysteine 102, cysteine 105, and cysteine 109 together coordinate [4Fe-4S] cluster.

It belongs to the complex I 23 kDa subunit family. NDH-1 is composed of 13 different subunits. Subunits NuoA, H, J, K, L, M, N constitute the membrane sector of the complex. Requires [4Fe-4S] cluster as cofactor.

Its subcellular location is the cell inner membrane. It carries out the reaction a quinone + NADH + 5 H(+)(in) = a quinol + NAD(+) + 4 H(+)(out). Its function is as follows. NDH-1 shuttles electrons from NADH, via FMN and iron-sulfur (Fe-S) centers, to quinones in the respiratory chain. The immediate electron acceptor for the enzyme in this species is believed to be ubiquinone. Couples the redox reaction to proton translocation (for every two electrons transferred, four hydrogen ions are translocated across the cytoplasmic membrane), and thus conserves the redox energy in a proton gradient. The protein is NADH-quinone oxidoreductase subunit I of Yersinia pseudotuberculosis serotype O:1b (strain IP 31758).